The following is a 78-amino-acid chain: Putative antitoxin VapB4 (78 aa).

Belongs to the UPF0330 family.

Possibly the antitoxin component of a type II toxin-antitoxin (TA) system. Its cognate toxin is VapC4 (Potential). This is Putative antitoxin VapB4 (vapB4) from Pyrococcus furiosus (strain ATCC 43587 / DSM 3638 / JCM 8422 / Vc1).